A 315-amino-acid polypeptide reads, in one-letter code: WD repeat domain-containing protein 83 (315 aa).

WD repeat units follow at residues 23-62, 65-104, 107-146, 151-188, 189-228, 233-272, and 275-313; these read CQQGAVRAVRFNADGNYLLTCGSDKSLKLWSVSRGTLLKT, GHGYEVLDADGSYDNSQLCSCSSDKTVILWDVASGQVTRK, GHAGKVNCVQFNEEATVMLSGSIDGTVRCWDTRSRRMEPI, ESQDGISSLKVSEHELLTGSVDGRVRRYDLRMGQLQVD, YIGSPITCVCFSRDGQCTLSSSLDSTVRLLDKSTGEMLGE, VNKGYKLDCCLTDKDTHVLSCSEDGHVYYWDLVEGSLTLK, and VGKAVVQSLSFHPTEPRLLTSMEGRVQVWGAEPEDAAEN.

It belongs to the WD repeat MORG1 family.

The protein localises to the cytoplasm. Its function is as follows. Molecular scaffold protein for various multimeric protein complexes. Acts as a module in the assembly of a multicomponent scaffold for the ERK pathway, linking ERK responses to specific agonists. Also involved in response to hypoxia by acting as a negative regulator of HIF1A/HIF-1-alpha. In Danio rerio (Zebrafish), this protein is WD repeat domain-containing protein 83 (wdr83).